The sequence spans 57 residues: Large ribosomal subunit protein eL20 (57 aa).

This sequence belongs to the eukaryotic ribosomal protein eL20 family. Part of the 50S ribosomal subunit. Binds 23S rRNA.

This Halorhabdus utahensis (strain DSM 12940 / JCM 11049 / AX-2) protein is Large ribosomal subunit protein eL20.